Consider the following 348-residue polypeptide: Rhodopsin (348 aa).

At M1 the chain carries N-acetylmethionine. The Extracellular portion of the chain corresponds to 1–36; it reads MNGTEGLNFYVPFSNKTGVVRSPFEYPQYYLAEPWQ. N2 and N15 each carry an N-linked (GlcNAc...) asparagine glycan. Residues 37 to 61 form a helical membrane-spanning segment; the sequence is FSVLAAYMFLLIVLGFPINFLTLYV. Over 62–73 the chain is Cytoplasmic; the sequence is TVQHKKLRTPLN. The helical transmembrane segment at 74–99 threads the bilayer; it reads YILLNLAVANLFMVFGGFTTTLYTSL. At 100–111 the chain is on the extracellular side; that stretch reads HAYFVFGPTGCN. C110 and C187 are oxidised to a cystine. Residues 112 to 133 form a helical membrane-spanning segment; sequence LEGFFATLGGEIALWSLVVLAI. A 'Ionic lock' involved in activated form stabilization motif is present at residues 134-136; that stretch reads ERY. Residues 134-152 lie on the Cytoplasmic side of the membrane; the sequence is ERYVVVCKPMSNFRFGENH. The helical transmembrane segment at 153 to 173 threads the bilayer; it reads AIMGLALTWIMAMACAAAPLV. Over 174-202 the chain is Extracellular; that stretch reads GWSRYIPEGMQCSCGIDYYTSRQEVNNES. E201 provides a ligand contact to Zn(2+). A helical membrane pass occupies residues 203–227; sequence FVIYMFVVHFTIPLVIIFFCYGQLV. The Cytoplasmic segment spans residues 228 to 252; sequence FTVKEAAAQQQESATTQKAEKEVTR. Residues 253–274 form a helical membrane-spanning segment; that stretch reads MVIIMVVAFLICWVPYASVAFY. At 275–286 the chain is on the extracellular side; it reads IFTHQGSDFGPI. A Zn(2+)-binding site is contributed by Q279. The helical transmembrane segment at 287–306 threads the bilayer; the sequence is FMTIPSFFAKSSSIYNPVIY. An N6-(retinylidene)lysine modification is found at K296. At 307–348 the chain is on the cytoplasmic side; that stretch reads IMMNKQFRNCMLTTLCCGRNPLGDDEASTTASKTETSQVAPA. 2 S-palmitoyl cysteine lipidation sites follow: C322 and C323. Phosphoserine is present on S334. A phosphothreonine mark is found at T335 and T336. Phosphoserine is present on S338. A phosphothreonine mark is found at T340 and T342. Residue S343 is modified to Phosphoserine.

This sequence belongs to the G-protein coupled receptor 1 family. Opsin subfamily. As to quaternary structure, homodimer. May form a complex composed of RHO, GRK1 and RCVRN in a Ca(2+)-dependent manner; RCVRN prevents the interaction between GRK1 and RHO. Interacts with GRK1. Interacts (phosphorylated form) with SAG. Interacts with GNAT1. Interacts with GNAT3. SAG and G-proteins compete for a common binding site. Interacts with PRCD; the interaction promotes PRCD stability. Forms a complex with ASAP1 and ARF4. Forms a complex with ASAP1, RAB11A, Rabin8/RAB3IP, ARF4 and RAB11FIP3; the complex regulates Golgi-to-cilia rhodopsin/RHO transport in photoreceptors. In terms of processing, contains one covalently linked retinal chromophore. Upon light absorption, the covalently bound 11-cis-retinal is converted to all-trans-retinal. After hydrolysis of the Schiff base and release of the covalently bound all-trans-retinal, active rhodopsin is regenerated by binding of a fresh molecule of 11-cis-retinal.

The protein localises to the membrane. It is found in the cell projection. It localises to the cilium. Its subcellular location is the photoreceptor outer segment. Photoreceptor required for image-forming vision at low light intensity. Light-induced isomerization of 11-cis to all-trans retinal triggers a conformational change that activates signaling via G-proteins. Signaling mediates the activation of phospholipase C. Subsequent receptor phosphorylation mediates displacement of the bound G-protein alpha subunit by arrestin and terminates signaling. The protein is Rhodopsin (RHO) of Tursiops truncatus (Atlantic bottle-nosed dolphin).